Here is a 303-residue protein sequence, read N- to C-terminus: Serine/threonine-protein phosphatase PP-X homolog 1 (303 aa).

Residues D51, H53, D79, and N111 each contribute to the Mn(2+) site. Catalysis depends on H112, which acts as the Proton donor. The Mn(2+) site is built by H161 and H235.

Belongs to the PPP phosphatase family. PP-4 (PP-X) subfamily. Mn(2+) is required as a cofactor.

It carries out the reaction O-phospho-L-seryl-[protein] + H2O = L-seryl-[protein] + phosphate. The enzyme catalyses O-phospho-L-threonyl-[protein] + H2O = L-threonyl-[protein] + phosphate. This Paramecium tetraurelia protein is Serine/threonine-protein phosphatase PP-X homolog 1 (Ppx1).